Reading from the N-terminus, the 128-residue chain is Large ribosomal subunit protein eL32 (128 aa).

The protein belongs to the eukaryotic ribosomal protein eL32 family.

This Thermoplasma volcanium (strain ATCC 51530 / DSM 4299 / JCM 9571 / NBRC 15438 / GSS1) protein is Large ribosomal subunit protein eL32 (rpl32e).